Consider the following 154-residue polypeptide: Ribonuclease H (154 aa).

The RNase H type-1 domain occupies 3 to 144 (ELPVVSIFTD…ADQLARDGVA (142 aa)). The Mg(2+) site is built by D12, E50, D72, and D136.

Belongs to the RNase H family. As to quaternary structure, monomer. Mg(2+) serves as cofactor.

It is found in the cytoplasm. The enzyme catalyses Endonucleolytic cleavage to 5'-phosphomonoester.. In terms of biological role, endonuclease that specifically degrades the RNA of RNA-DNA hybrids. In Bradyrhizobium sp. (strain ORS 278), this protein is Ribonuclease H.